A 452-amino-acid chain; its full sequence is tRNA modification GTPase MnmE (452 aa).

Arg21, Glu78, and Lys118 together coordinate (6S)-5-formyl-5,6,7,8-tetrahydrofolate. Residues 214 to 375 (GMKVVIAGRP…LREHLKQAMG (162 aa)) form the TrmE-type G domain. K(+) is bound at residue Asn224. GTP-binding positions include 224–229 (NAGKSS), 243–249 (TDIAGTT), and 268–271 (DTAG). Position 228 (Ser228) interacts with Mg(2+). Positions 243, 245, and 248 each coordinate K(+). Thr249 serves as a coordination point for Mg(2+). Lys452 is a (6S)-5-formyl-5,6,7,8-tetrahydrofolate binding site.

Belongs to the TRAFAC class TrmE-Era-EngA-EngB-Septin-like GTPase superfamily. TrmE GTPase family. Homodimer. Heterotetramer of two MnmE and two MnmG subunits. It depends on K(+) as a cofactor.

The protein localises to the cytoplasm. Its function is as follows. Exhibits a very high intrinsic GTPase hydrolysis rate. Involved in the addition of a carboxymethylaminomethyl (cmnm) group at the wobble position (U34) of certain tRNAs, forming tRNA-cmnm(5)s(2)U34. The sequence is that of tRNA modification GTPase MnmE from Haemophilus influenzae (strain ATCC 51907 / DSM 11121 / KW20 / Rd).